The primary structure comprises 225 residues: Cyanamide hydratase DDI2 (225 aa).

One can recognise an HD domain in the interval Val-52 to Val-162.

This sequence belongs to the cyanamide dehydrase family. As to quaternary structure, homohexamer. Zn(2+) serves as cofactor.

It catalyses the reaction urea = cyanamide + H2O. Cyanamide hydratase involved in the detoxification and/or utilization of cyanamide, a toxic nitrile compound distributed widely in the environment. This is Cyanamide hydratase DDI2 from Saccharomyces cerevisiae (strain ATCC 204508 / S288c) (Baker's yeast).